A 664-amino-acid chain; its full sequence is Acetylcholinesterase (664 aa).

The first 29 residues, 1 to 29 (MFVNQRTRRPYMSVFVLVLGAAVICPAYG), serve as a signal peptide directing secretion. A disulfide bridge links cysteine 95 with cysteine 122. Asparagine 117 is a glycosylation site (N-linked (GlcNAc...) asparagine). The active-site Acyl-ester intermediate is serine 261. Cysteine 315 and cysteine 330 are joined by a disulfide. Asparagine 316 is a glycosylation site (N-linked (GlcNAc...) asparagine). Active-site charge relay system residues include glutamate 390 and histidine 504. A disulfide bridge links cysteine 466 with cysteine 588. N-linked (GlcNAc...) asparagine glycosylation is present at asparagine 517. Residue asparagine 647 is the site of GPI-anchor amidated asparagine attachment. A propeptide spans 648–664 (KTPPHPQVILETRAFMH) (removed in mature form).

It belongs to the type-B carboxylesterase/lipase family. Homodimer; disulfide-linked.

Its subcellular location is the synapse. The protein localises to the cell membrane. It carries out the reaction acetylcholine + H2O = choline + acetate + H(+). Rapidly hydrolyzes choline released into the synapse. It can hydrolyze butyrylthiocholine. In Anopheles stephensi (Indo-Pakistan malaria mosquito), this protein is Acetylcholinesterase.